A 246-amino-acid polypeptide reads, in one-letter code: Large ribosomal subunit protein uL30-like 1 (246 aa).

Serine 54 is modified (phosphoserine).

It belongs to the universal ribosomal protein uL30 family.

In Pongo abelii (Sumatran orangutan), this protein is Large ribosomal subunit protein uL30-like 1 (RPL7L1).